The chain runs to 369 residues: Mannose-1-phosphate guanylyltransferase catalytic subunit beta (369 aa).

Residues 12 to 231 (RALILVGGYG…TGFWMDIGQP (220 aa)) are substrate-binding domain. Asp-120 serves as a coordination point for GDP-alpha-D-mannose. Asp-120 is a binding site for Mg(2+). Lys-171 is an active-site residue. Asp-227 serves as a coordination point for GDP-alpha-D-mannose. Asp-227 contributes to the Mg(2+) binding site. A hexapeptide repeat domain region spans residues 254–369 (YTGPGVVGNV…ASVPEPQIIM (116 aa)).

Belongs to the transferase hexapeptide repeat family. As to quaternary structure, component of the GMPPA-GMPPB mannose-1-phosphate guanylyltransferase complex composed of 4 Gmppa subunits and 8 Gmppb subunits; the complex is organized into three layers, a central layer made up of 2 Gmppa dimers sandwiched between two layers each made up of 2 Gmppb dimers. Gmppb catalytic activity is reduced when part of the complex and binding of GDP-alpha-D-Mannose by Gmppa induces allosteric feedback inhibition of Gmppb. Mg(2+) serves as cofactor.

The enzyme catalyses alpha-D-mannose 1-phosphate + GTP + H(+) = GDP-alpha-D-mannose + diphosphate. Its pathway is nucleotide-sugar biosynthesis; GDP-alpha-D-mannose biosynthesis; GDP-alpha-D-mannose from alpha-D-mannose 1-phosphate (GTP route): step 1/1. With respect to regulation, enzyme activity is reduced by incorporation into the GMPPA-GMPPB mannose-1-phosphate guanylyltransferase complex. Allosterically inhibited, when part of the GMPPA-GMPPB complex, by GDP-alpha-D-mannose binding to Gmppa. In terms of biological role, catalytic subunit of the GMPPA-GMPPB mannose-1-phosphate guanylyltransferase complex. Catalyzes the formation of GDP-mannose, an essential precursor of glycan moieties of glycoproteins and glycolipids. Can catalyze the reverse reaction in vitro. Together with GMPPA regulates GDP-alpha-D-mannose levels. This chain is Mannose-1-phosphate guanylyltransferase catalytic subunit beta, found in Drosophila melanogaster (Fruit fly).